The sequence spans 238 residues: 4-hydroxy-tetrahydrodipicolinate reductase (238 aa).

Residue 12 to 17 (GASGRM) coordinates NAD(+). NADP(+) is bound at residue arginine 40. NAD(+) is bound by residues 93–95 (GTT) and 117–120 (ASNF). Histidine 149 acts as the Proton donor/acceptor in catalysis. Residue histidine 150 participates in (S)-2,3,4,5-tetrahydrodipicolinate binding. Lysine 153 serves as the catalytic Proton donor. 159 to 160 (GT) provides a ligand contact to (S)-2,3,4,5-tetrahydrodipicolinate.

It belongs to the DapB family.

It localises to the cytoplasm. It carries out the reaction (S)-2,3,4,5-tetrahydrodipicolinate + NAD(+) + H2O = (2S,4S)-4-hydroxy-2,3,4,5-tetrahydrodipicolinate + NADH + H(+). The enzyme catalyses (S)-2,3,4,5-tetrahydrodipicolinate + NADP(+) + H2O = (2S,4S)-4-hydroxy-2,3,4,5-tetrahydrodipicolinate + NADPH + H(+). It functions in the pathway amino-acid biosynthesis; L-lysine biosynthesis via DAP pathway; (S)-tetrahydrodipicolinate from L-aspartate: step 4/4. Functionally, catalyzes the conversion of 4-hydroxy-tetrahydrodipicolinate (HTPA) to tetrahydrodipicolinate. The sequence is that of 4-hydroxy-tetrahydrodipicolinate reductase from Xanthomonas axonopodis pv. citri (strain 306).